The following is a 275-amino-acid chain: Urease accessory protein UreD (275 aa).

Belongs to the UreD family. In terms of assembly, ureD, UreF and UreG form a complex that acts as a GTP-hydrolysis-dependent molecular chaperone, activating the urease apoprotein by helping to assemble the nickel containing metallocenter of UreC. The UreE protein probably delivers the nickel.

The protein resides in the cytoplasm. Functionally, required for maturation of urease via the functional incorporation of the urease nickel metallocenter. This is Urease accessory protein UreD from Cereibacter sphaeroides (strain ATCC 17029 / ATH 2.4.9) (Rhodobacter sphaeroides).